A 179-amino-acid polypeptide reads, in one-letter code: Archaemetzincin (179 aa).

His128 contributes to the Zn(2+) binding site. Glu129 acts as the Proton acceptor in catalysis. Zn(2+) contacts are provided by His132, His138, Cys139, Cys144, Cys163, and Cys166.

It belongs to the peptidase M54 family. Monomer. It depends on Zn(2+) as a cofactor.

Functionally, probable zinc metalloprotease whose natural substrate is unknown. In Methanocaldococcus jannaschii (strain ATCC 43067 / DSM 2661 / JAL-1 / JCM 10045 / NBRC 100440) (Methanococcus jannaschii), this protein is Archaemetzincin.